Here is a 201-residue protein sequence, read N- to C-terminus: Pyridoxine/pyridoxamine 5'-phosphate oxidase (201 aa).

Residues Arg-49–Lys-54, Tyr-64–Thr-65, Lys-71, and Gln-93 contribute to the FMN site. Lys-54 contributes to the substrate binding site. Residues Tyr-111, Arg-115, and Ser-119 each coordinate substrate. Residues Gln-128 to Ser-129 and Trp-172 each bind FMN. Arg-178 to His-180 is a substrate binding site. An FMN-binding site is contributed by Arg-182.

This sequence belongs to the pyridoxamine 5'-phosphate oxidase family. In terms of assembly, homodimer. It depends on FMN as a cofactor.

It carries out the reaction pyridoxamine 5'-phosphate + O2 + H2O = pyridoxal 5'-phosphate + H2O2 + NH4(+). The enzyme catalyses pyridoxine 5'-phosphate + O2 = pyridoxal 5'-phosphate + H2O2. The protein operates within cofactor metabolism; pyridoxal 5'-phosphate salvage; pyridoxal 5'-phosphate from pyridoxamine 5'-phosphate: step 1/1. It participates in cofactor metabolism; pyridoxal 5'-phosphate salvage; pyridoxal 5'-phosphate from pyridoxine 5'-phosphate: step 1/1. Functionally, catalyzes the oxidation of either pyridoxine 5'-phosphate (PNP) or pyridoxamine 5'-phosphate (PMP) into pyridoxal 5'-phosphate (PLP). This is Pyridoxine/pyridoxamine 5'-phosphate oxidase from Roseobacter denitrificans (strain ATCC 33942 / OCh 114) (Erythrobacter sp. (strain OCh 114)).